A 264-amino-acid chain; its full sequence is MLELRLVQGSLLKKVLESIKDLVNDANFDFSSSGFSLQSMDSSHVALVALLLKSEGFEHYRCDRNTSMGMNLGNMSKMLKCAGNDDIITIKGDDGSDTVTFMFESPTQDKIADFEMKLMDIDSEHLGIPEAEYHAIVKMPSAEFARICKDLASIGDTVVISVTKEGVKFSTRGDIGTANIVLRQNTTVDKPEDATVIEMNEPVSMTFALRYMNSFTKATPLSNTVTISMSPDLPVVVEYKIAEMGYVRFYLAPKMEEDEPEPGA.

A DNA-binding region spans residues 61-80 (RCDRNTSMGMNLGNMSKMLK).

Belongs to the PCNA family.

The protein localises to the nucleus. Its function is as follows. This protein is an auxiliary protein of DNA polymerase delta and is involved in the control of eukaryotic DNA replication by increasing the polymerase's processibility during elongation of the leading strand. The polypeptide is Proliferating cell nuclear antigen (PCNA) (Populus nigra (Lombardy poplar)).